A 431-amino-acid chain; its full sequence is Serine/threonine-protein kinase Sgk1 (431 aa).

A necessary for localization to the mitochondria region spans residues 1–60 (MTVKTEAARDTLTYSRMRGMVAILIAFMKQRRMGLNDFIQKIANNSYACKHPEVQSILKI). The interval 64–92 (QEPELMNANPSPPPSPSQQINLGPSSNPH) is disordered. At S74 the chain carries Phosphoserine. S78 is modified (phosphoserine; by MAPK7). Polar residues predominate over residues 81-91 (QQINLGPSSNP). In terms of domain architecture, Protein kinase spans 98-355 (FHFLKVIGKG…FMEIKNHVFF (258 aa)). ATP contacts are provided by residues 104–112 (IGKGSFGKV) and K127. The Nuclear localization signal signature appears at 131 to 141 (KKAILKKKEEK). The active-site Proton acceptor is the D222. At T256 the chain carries Phosphothreonine; by PDPK1. Positions 356–431 (SLINWEDLIN…SYAPPMDSFL (76 aa)) constitute an AGC-kinase C-terminal domain. Position 369 is a phosphothreonine; by PKA (T369). S397, S401, and S422 each carry phosphoserine.

This sequence belongs to the protein kinase superfamily. AGC Ser/Thr protein kinase family. As to quaternary structure, homodimer; disulfide-linked. Forms a trimeric complex with FBXW7 and NOTCH1. Interacts with MAPK3/ERK1, MAPK1/ERK2, MAP2K1/MEK1, MAP2K2/MEK2, NEDD4, NEDD4L, MAPT/TAU, MAPK7, CREB1, SLC9A3R2/NHERF2 and KCNJ1/ROMK1. Associates with the mammalian target of rapamycin complex 2 (mTORC2) via an interaction with MAPKAP1/SIN1. In terms of processing, regulated by phosphorylation. Activated by phosphorylation on Ser-422 by mTORC2, transforming it into a substrate for PDPK1 which phosphorylates it on Thr-256. Phosphorylation on Ser-397 and Ser-401 are also essential for its activity. Phosphorylation on Ser-78 by MAPK7 is required for growth factor-induced cell cycle progression. Post-translationally, ubiquitinated by NEDD4L; which promotes proteasomal degradation. Ubiquitinated by SYVN1 at the endoplasmic reticulum; which promotes rapid proteasomal degradation and maintains a high turnover rate in resting cells.

It is found in the cytoplasm. The protein localises to the nucleus. The protein resides in the endoplasmic reticulum membrane. Its subcellular location is the cell membrane. It localises to the mitochondrion. The catalysed reaction is L-seryl-[protein] + ATP = O-phospho-L-seryl-[protein] + ADP + H(+). It catalyses the reaction L-threonyl-[protein] + ATP = O-phospho-L-threonyl-[protein] + ADP + H(+). Two specific sites, one in the kinase domain (Thr-256) and the other in the C-terminal regulatory region (Ser-422), need to be phosphorylated for its full activation. Phosphorylation at Ser-397 and Ser-401 are also essential for its activity. Activated by WNK1, WNK2, WNK3 and WNK4; which promote phosphorylation by mTORC2. Serine/threonine-protein kinase which is involved in the regulation of a wide variety of ion channels, membrane transporters, cellular enzymes, transcription factors, neuronal excitability, cell growth, proliferation, survival, migration and apoptosis. Plays an important role in cellular stress response. Contributes to regulation of renal Na(+) retention, renal K(+) elimination, salt appetite, gastric acid secretion, intestinal Na(+)/H(+) exchange and nutrient transport, insulin-dependent salt sensitivity of blood pressure, salt sensitivity of peripheral glucose uptake, cardiac repolarization and memory consolidation. Up-regulates Na(+) channels: SCNN1A/ENAC, SCN5A and ASIC1/ACCN2, K(+) channels: KCNJ1/ROMK1, KCNA1-5, KCNQ1-5 and KCNE1, epithelial Ca(2+) channels: TRPV5 and TRPV6, chloride channels: BSND, CLCN2 and CFTR, glutamate transporters: SLC1A3/EAAT1, SLC1A2 /EAAT2, SLC1A1/EAAT3, SLC1A6/EAAT4 and SLC1A7/EAAT5, amino acid transporters: SLC1A5/ASCT2, SLC38A1/SN1 and SLC6A19, creatine transporter: SLC6A8, Na(+)/dicarboxylate cotransporter: SLC13A2/NADC1, Na(+)-dependent phosphate cotransporter: SLC34A2/NAPI-2B, glutamate receptor: GRIK2/GLUR6. Up-regulates carriers: SLC9A3/NHE3, SLC12A1/NKCC2, SLC12A3/NCC, SLC5A3/SMIT, SLC2A1/GLUT1, SLC5A1/SGLT1 and SLC15A2/PEPT2. Regulates enzymes: GSK3A/B, PMM2 and Na(+)/K(+) ATPase, and transcription factors: CTNNB1 and nuclear factor NF-kappa-B. Stimulates sodium transport into epithelial cells by enhancing the stability and expression of SCNN1A/ENAC. This is achieved by phosphorylating the NEDD4L ubiquitin E3 ligase, promoting its interaction with 14-3-3 proteins, thereby preventing it from binding to SCNN1A/ENAC and targeting it for degradation. Regulates store-operated Ca(+2) entry (SOCE) by stimulating ORAI1 and STIM1. Regulates KCNJ1/ROMK1 directly via its phosphorylation or indirectly via increased interaction with SLC9A3R2/NHERF2. Phosphorylates MDM2 and activates MDM2-dependent ubiquitination of p53/TP53. Phosphorylates MAPT/TAU and mediates microtubule depolymerization and neurite formation in hippocampal neurons. Phosphorylates SLC2A4/GLUT4 and up-regulates its activity. Phosphorylates APBB1/FE65 and promotes its localization to the nucleus. Phosphorylates MAPK1/ERK2 and activates it by enhancing its interaction with MAP2K1/MEK1 and MAP2K2/MEK2. Phosphorylates FBXW7 and plays an inhibitory role in the NOTCH1 signaling. Phosphorylates FOXO1 resulting in its relocalization from the nucleus to the cytoplasm. Phosphorylates FOXO3, promoting its exit from the nucleus and interference with FOXO3-dependent transcription. Phosphorylates BRAF and MAP3K3/MEKK3 and inhibits their activity. Phosphorylates SLC9A3/NHE3 in response to dexamethasone, resulting in its activation and increased localization at the cell membrane. Phosphorylates CREB1. Necessary for vascular remodeling during angiogenesis. The protein is Serine/threonine-protein kinase Sgk1 (SGK1) of Bos taurus (Bovine).